The following is a 144-amino-acid chain: Prefoldin subunit alpha (144 aa).

It belongs to the prefoldin subunit alpha family. Heterohexamer of two alpha and four beta subunits.

The protein resides in the cytoplasm. Molecular chaperone capable of stabilizing a range of proteins. Seems to fulfill an ATP-independent, HSP70-like function in archaeal de novo protein folding. The protein is Prefoldin subunit alpha of Methanosarcina barkeri (strain Fusaro / DSM 804).